Reading from the N-terminus, the 681-residue chain is T-box brain protein 1 (681 aa).

Disordered regions lie at residues 43–83 and 108–127; these read TDNL…RSKL and SQSS…FPYP. Polar residues predominate over residues 58–68; it reads GMTNQSDTDNF. Residues 108–122 show a composition bias toward low complexity; it reads SQSSQPQSAATAPSA. A DNA-binding region (T-box) is located at residues 213 to 393; sequence LWLKFHRHQT…HNPFAKGFRD (181 aa). Residue Thr408 is modified to Phosphothreonine. Ser410 is modified (phosphoserine). Residues 447-483 are disordered; that stretch reads PGAGAGPGPGTDRSVPHTNGLLSPQQAEDPGAPSPQR. The segment covering 462–472 has biased composition (polar residues); sequence PHTNGLLSPQQ. Residue Ser594 is modified to Phosphoserine. A disordered region spans residues 597–655; the sequence is APAAEDAKPKDLSDSSWIETPSSIKSIDSSDSGIYEQAKRRRISPADTPVSESSSPLKS. The segment covering 618–628 has biased composition (low complexity); the sequence is SSIKSIDSSDS. The residue at position 640 (Ser640) is a Phosphoserine.

As to quaternary structure, homodimer. Part of a complex containing CASK, TBR1 and TSPYL2; may modulate gene expression in response to neuronal synaptic activity. Forms homodimers. Interacts with FOXP2. Interacts with FOXP1. Interacts with BCL11A. As to expression, expressed in the developing and adult cortex. Expressed in the olfactory bulbs.

The protein resides in the nucleus. Transcriptional repressor involved in multiple aspects of cortical development, including neuronal migration, laminar and areal identity, and axonal projection. As transcriptional repressor of FEZF2, it blocks the formation of the corticospinal (CS) tract from layer 6 projection neurons, thereby restricting the origin of CS axons specifically to layer 5 neurons. The chain is T-box brain protein 1 (Tbr1) from Mus musculus (Mouse).